Consider the following 80-residue polypeptide: MLNDMPALTHEQQQLAVERIQALMAEGMSSGAAIAQVARELRAGYTGERVTLRWEEDTEVLETPAARAETDPYDSNPDDD.

The segment at 58-80 is disordered; the sequence is TEVLETPAARAETDPYDSNPDDD.

It belongs to the UPF0181 family.

The chain is UPF0181 protein SG1330 from Sodalis glossinidius (strain morsitans).